The following is a 140-amino-acid chain: Large ribosomal subunit protein uL16 (140 aa).

This sequence belongs to the universal ribosomal protein uL16 family. In terms of assembly, part of the 50S ribosomal subunit.

Binds 23S rRNA and is also seen to make contacts with the A and possibly P site tRNAs. This chain is Large ribosomal subunit protein uL16, found in Citrifermentans bemidjiense (strain ATCC BAA-1014 / DSM 16622 / JCM 12645 / Bem) (Geobacter bemidjiensis).